The chain runs to 238 residues: Large ribosomal subunit protein bL25 (238 aa).

The segment covering 1–10 (MATTVKELKA) has biased composition (basic and acidic residues). The tract at residues 1-24 (MATTVKELKATARPKSGKGAARAE) is disordered.

It belongs to the bacterial ribosomal protein bL25 family. CTC subfamily. In terms of assembly, part of the 50S ribosomal subunit; part of the 5S rRNA/L5/L18/L25 subcomplex. Contacts the 5S rRNA. Binds to the 5S rRNA independently of L5 and L18.

Its function is as follows. This is one of the proteins that binds to the 5S RNA in the ribosome where it forms part of the central protuberance. In Bradyrhizobium diazoefficiens (strain JCM 10833 / BCRC 13528 / IAM 13628 / NBRC 14792 / USDA 110), this protein is Large ribosomal subunit protein bL25.